A 71-amino-acid polypeptide reads, in one-letter code: Omega-conotoxin-like CnVIIE (71 aa).

The N-terminal stretch at 1 to 22 is a signal peptide; the sequence is MKLTCVVIVAVLLLTACQLITA. The propeptide occupies 23–45; it reads DDSRGTQKHRALRSDTKLSMSTR. Cystine bridges form between C46-C61, C53-C65, and C60-C70. A 4-hydroxyproline; partial modification is found at P52. At C70 the chain carries Cysteine amide.

Belongs to the conotoxin M superfamily. As to expression, expressed by the venom duct.

Its subcellular location is the secreted. Its function is as follows. Omega-conotoxins act at presynaptic membranes, they bind and block voltage-gated calcium channels (Cav). This chain is Omega-conotoxin-like CnVIIE, found in Conus consors (Singed cone).